The primary structure comprises 31 residues: Cytochrome b6-f complex subunit 6 (31 aa).

A helical transmembrane segment spans residues 4–24; the sequence is ITSYFGFLLAALTITSALLIG.

This sequence belongs to the PetL family. In terms of assembly, the 4 large subunits of the cytochrome b6-f complex are cytochrome b6, subunit IV (17 kDa polypeptide, PetD), cytochrome f and the Rieske protein, while the 4 small subunits are PetG, PetL, PetM and PetN. The complex functions as a dimer.

The protein resides in the plastid. The protein localises to the chloroplast thylakoid membrane. Its function is as follows. Component of the cytochrome b6-f complex, which mediates electron transfer between photosystem II (PSII) and photosystem I (PSI), cyclic electron flow around PSI, and state transitions. PetL is important for photoautotrophic growth as well as for electron transfer efficiency and stability of the cytochrome b6-f complex. The sequence is that of Cytochrome b6-f complex subunit 6 from Piper cenocladum (Ant piper).